The following is a 285-amino-acid chain: 4-diphosphocytidyl-2-C-methyl-D-erythritol kinase (285 aa).

Lys-12 is an active-site residue. 95–105 is a binding site for ATP; the sequence is PMGGGVGGGSS. Asp-137 is an active-site residue.

The protein belongs to the GHMP kinase family. IspE subfamily.

It carries out the reaction 4-CDP-2-C-methyl-D-erythritol + ATP = 4-CDP-2-C-methyl-D-erythritol 2-phosphate + ADP + H(+). It participates in isoprenoid biosynthesis; isopentenyl diphosphate biosynthesis via DXP pathway; isopentenyl diphosphate from 1-deoxy-D-xylulose 5-phosphate: step 3/6. Functionally, catalyzes the phosphorylation of the position 2 hydroxy group of 4-diphosphocytidyl-2C-methyl-D-erythritol. This is 4-diphosphocytidyl-2-C-methyl-D-erythritol kinase from Actinobacillus pleuropneumoniae serotype 7 (strain AP76).